A 354-amino-acid chain; its full sequence is Glycerol-1-phosphate dehydrogenase [NAD(P)+] (354 aa).

NAD(+) is bound by residues 103–107 and 125–128; these read GRAVD and TAAS. Asp130 provides a ligand contact to substrate. NAD(+) is bound at residue Ser134. Asp176 is a substrate binding site. The Zn(2+) site is built by Asp176 and His255. His259 serves as a coordination point for substrate. Residue His271 coordinates Zn(2+).

It belongs to the glycerol-1-phosphate dehydrogenase family. Homodimer. Zn(2+) serves as cofactor.

It localises to the cytoplasm. It carries out the reaction sn-glycerol 1-phosphate + NAD(+) = dihydroxyacetone phosphate + NADH + H(+). The enzyme catalyses sn-glycerol 1-phosphate + NADP(+) = dihydroxyacetone phosphate + NADPH + H(+). It functions in the pathway membrane lipid metabolism; glycerophospholipid metabolism. Its function is as follows. Catalyzes the NAD(P)H-dependent reduction of dihydroxyacetonephosphate (DHAP or glycerone phosphate) to glycerol 1-phosphate (G1P). The G1P thus generated is used as the glycerophosphate backbone of phospholipids in the cellular membranes of Archaea. The sequence is that of Glycerol-1-phosphate dehydrogenase [NAD(P)+] from Cenarchaeum symbiosum (strain A).